The following is a 132-amino-acid chain: Small ribosomal subunit protein uS8 (132 aa).

The protein belongs to the universal ribosomal protein uS8 family. As to quaternary structure, part of the 30S ribosomal subunit. Contacts proteins S5 and S12.

In terms of biological role, one of the primary rRNA binding proteins, it binds directly to 16S rRNA central domain where it helps coordinate assembly of the platform of the 30S subunit. This is Small ribosomal subunit protein uS8 from Sinorhizobium fredii (strain NBRC 101917 / NGR234).